We begin with the raw amino-acid sequence, 189 residues long: Cell division protein SepF (189 aa).

Positions 18–64 (EVTDHEDVAKERPVKVQKTEQTPSQQQRKPERPQETVPPRRQHIKSD) are disordered. Residues 22 to 35 (HEDVAKERPVKVQK) are compositionally biased toward basic and acidic residues.

It belongs to the SepF family. Homodimer. Interacts with FtsZ.

The protein localises to the cytoplasm. Its function is as follows. Cell division protein that is part of the divisome complex and is recruited early to the Z-ring. Probably stimulates Z-ring formation, perhaps through the cross-linking of FtsZ protofilaments. Its function overlaps with FtsA. The sequence is that of Cell division protein SepF from Streptococcus thermophilus (strain ATCC BAA-250 / LMG 18311).